The following is a 169-amino-acid chain: Ribosome maturation factor RimM (169 aa).

The 75-residue stretch at 95-169 (EDGYYWTDLI…QITVDWELGY (75 aa)) folds into the PRC barrel domain.

The protein belongs to the RimM family. As to quaternary structure, binds ribosomal protein uS19.

Its subcellular location is the cytoplasm. An accessory protein needed during the final step in the assembly of 30S ribosomal subunit, possibly for assembly of the head region. Essential for efficient processing of 16S rRNA. May be needed both before and after RbfA during the maturation of 16S rRNA. It has affinity for free ribosomal 30S subunits but not for 70S ribosomes. This chain is Ribosome maturation factor RimM, found in Nitrosomonas europaea (strain ATCC 19718 / CIP 103999 / KCTC 2705 / NBRC 14298).